A 206-amino-acid polypeptide reads, in one-letter code: Small ribosomal subunit protein uS4 (206 aa).

In terms of domain architecture, S4 RNA-binding spans 93–156 (CRLDNLVYRL…RKIKIIAEAL (64 aa)).

It belongs to the universal ribosomal protein uS4 family. Part of the 30S ribosomal subunit. Contacts protein S5. The interaction surface between S4 and S5 is involved in control of translational fidelity.

One of the primary rRNA binding proteins, it binds directly to 16S rRNA where it nucleates assembly of the body of the 30S subunit. Functionally, with S5 and S12 plays an important role in translational accuracy. The polypeptide is Small ribosomal subunit protein uS4 (Protochlamydia amoebophila (strain UWE25)).